Here is a 428-residue protein sequence, read N- to C-terminus: C4-dicarboxylate transport protein (428 aa).

8 helical membrane-spanning segments follow: residues 8–28, 44–64, 78–98, 148–168, 184–204, 222–242, 307–327, and 355–375; these read VLYVQVIFAIVVGVILGHYYP, LIKMVIGPIIFCTVVTGIAGM, LLYFEIVSTCALVLGLAATHI, GEILQILLIALLFGSVLAHLG, VLFGIVHIVTKLAPIGAFGAM, LIGTFYLTSVVFVLVVLGAIA, IYMTMAVLFIAQATNIELTWM, and AATLAVVPTIPLSGMVLILGI.

It belongs to the dicarboxylate/amino acid:cation symporter (DAACS) (TC 2.A.23) family.

It is found in the cell inner membrane. Functionally, responsible for the transport of dicarboxylates such as succinate, fumarate, and malate from the periplasm across the membrane. The polypeptide is C4-dicarboxylate transport protein (Burkholderia mallei (strain ATCC 23344)).